The chain runs to 102 residues: Small ribosomal subunit protein bS18c (102 aa).

Residues 1-19 are compositionally biased toward basic residues; the sequence is MDKTKRPLRKSKRSFRRRL. Residues 1-26 form a disordered region; sequence MDKTKRPLRKSKRSFRRRLPPPIGSG.

This sequence belongs to the bacterial ribosomal protein bS18 family. As to quaternary structure, part of the 30S ribosomal subunit.

The protein resides in the plastid. The protein localises to the chloroplast. In Piper cenocladum (Ant piper), this protein is Small ribosomal subunit protein bS18c.